A 227-amino-acid chain; its full sequence is MTENLQDMFESSYRGEAPEQLAARPPWSIGQPQPEILKLIEQGKVHGDVLDAGCGEAATALYLAERGHTAVGLDAAPTAIQLAKGYAAERGLTNVTFDVADISNFTGYDGRFGTIIDSTLFHSMPVELREGYQQSIVRAAAPGANYIVLVFDKAAFPPDIDGPHPVSEPELREIVSKYWTVDDISPARLYANGDGFQDGGAQRFAEFREESNGWVSMAGWLLQAHRD.

The protein belongs to the methyltransferase superfamily. Monomer.

Its subcellular location is the cytoplasm. It catalyses the reaction 2-heptyl-1-hydroxy-4(1H)-quinolinone + S-adenosyl-L-methionine = 2-heptyl-1-methoxy-4(1H)-quinolinone + S-adenosyl-L-homocysteine + H(+). The enzyme catalyses 3-bromo-2-heptyl-1-hydroxy-4(1H)-quinolinone + S-adenosyl-L-methionine = 3-bromo-2-heptyl-1-methoxy-4(1H)-quinolinone + S-adenosyl-L-homocysteine + H(+). Involved in cellular response to chemical stress and may contribute to resistance toward antimicrobial natural compounds as well as drugs. Catalyzes the methylation and detoxification of the P.aeruginosa toxin 2-heptyl-1-hydroxy-4(1H)-quinolinone (HQNO) to 2-heptyl-1-methoxy-4(1H)-quinolinone (HMOQ). Can also methylate 3-bromo-2-heptyl-1-hydroxy-4(1H)-quinolinone, and shows much lower activity with 1-hydroxyquinolin-4(1H)-one, quercetin, 4-hydroxyquinolin-2(1H)-one (DHQ) and 4-hydroxyisoquinolin-1(2H)-one. The sequence is that of 2-heptyl-1-hydroxyquinolin-4(1H)-one methyltransferase from Mycobacteroides abscessus (strain ATCC 19977 / DSM 44196 / CCUG 20993 / CIP 104536 / JCM 13569 / NCTC 13031 / TMC 1543 / L948) (Mycobacterium abscessus).